The sequence spans 317 residues: Acetyl-coenzyme A carboxylase carboxyl transferase subunit alpha (317 aa).

The region spanning 40-293 (LEVRVREAIV…GDVIANALGE (254 aa)) is the CoA carboxyltransferase C-terminal domain.

The protein belongs to the AccA family. In terms of assembly, acetyl-CoA carboxylase is a heterohexamer composed of biotin carboxyl carrier protein (AccB), biotin carboxylase (AccC) and two subunits each of ACCase subunit alpha (AccA) and ACCase subunit beta (AccD).

It is found in the cytoplasm. The enzyme catalyses N(6)-carboxybiotinyl-L-lysyl-[protein] + acetyl-CoA = N(6)-biotinyl-L-lysyl-[protein] + malonyl-CoA. The protein operates within lipid metabolism; malonyl-CoA biosynthesis; malonyl-CoA from acetyl-CoA: step 1/1. In terms of biological role, component of the acetyl coenzyme A carboxylase (ACC) complex. First, biotin carboxylase catalyzes the carboxylation of biotin on its carrier protein (BCCP) and then the CO(2) group is transferred by the carboxyltransferase to acetyl-CoA to form malonyl-CoA. This is Acetyl-coenzyme A carboxylase carboxyl transferase subunit alpha from Rhizobium leguminosarum bv. trifolii (strain WSM2304).